A 342-amino-acid chain; its full sequence is Glycerol-3-phosphate dehydrogenase [NAD(P)+] (342 aa).

NADPH is bound by residues tryptophan 11, arginine 31, and lysine 102. Residues lysine 102 and glycine 132 each contribute to the sn-glycerol 3-phosphate site. Alanine 136 serves as a coordination point for NADPH. Positions 187, 240, 250, 251, and 252 each coordinate sn-glycerol 3-phosphate. The Proton acceptor role is filled by lysine 187. Arginine 251 contacts NADPH. Residue glutamate 277 participates in NADPH binding.

Belongs to the NAD-dependent glycerol-3-phosphate dehydrogenase family.

The protein resides in the cytoplasm. It carries out the reaction sn-glycerol 3-phosphate + NAD(+) = dihydroxyacetone phosphate + NADH + H(+). It catalyses the reaction sn-glycerol 3-phosphate + NADP(+) = dihydroxyacetone phosphate + NADPH + H(+). It participates in membrane lipid metabolism; glycerophospholipid metabolism. In terms of biological role, catalyzes the reduction of the glycolytic intermediate dihydroxyacetone phosphate (DHAP) to sn-glycerol 3-phosphate (G3P), the key precursor for phospholipid synthesis. In Symbiobacterium thermophilum (strain DSM 24528 / JCM 14929 / IAM 14863 / T), this protein is Glycerol-3-phosphate dehydrogenase [NAD(P)+].